Consider the following 181-residue polypeptide: ATP synthase subunit delta (181 aa).

This sequence belongs to the ATPase delta chain family. In terms of assembly, F-type ATPases have 2 components, F(1) - the catalytic core - and F(0) - the membrane proton channel. F(1) has five subunits: alpha(3), beta(3), gamma(1), delta(1), epsilon(1). F(0) has three main subunits: a(1), b(2) and c(10-14). The alpha and beta chains form an alternating ring which encloses part of the gamma chain. F(1) is attached to F(0) by a central stalk formed by the gamma and epsilon chains, while a peripheral stalk is formed by the delta and b chains.

The protein localises to the cell membrane. Its function is as follows. F(1)F(0) ATP synthase produces ATP from ADP in the presence of a proton or sodium gradient. F-type ATPases consist of two structural domains, F(1) containing the extramembraneous catalytic core and F(0) containing the membrane proton channel, linked together by a central stalk and a peripheral stalk. During catalysis, ATP synthesis in the catalytic domain of F(1) is coupled via a rotary mechanism of the central stalk subunits to proton translocation. Functionally, this protein is part of the stalk that links CF(0) to CF(1). It either transmits conformational changes from CF(0) to CF(1) or is implicated in proton conduction. The chain is ATP synthase subunit delta from Mycoplasma mycoides subsp. mycoides SC (strain CCUG 32753 / NCTC 10114 / PG1).